A 295-amino-acid chain; its full sequence is Deoxyuridine 5'-triphosphate nucleotidohydrolase (295 aa).

Residue arginine 178–glycine 180 participates in substrate binding. The span at asparagine 260 to valine 272 shows a compositional bias: basic and acidic residues. A disordered region spans residues asparagine 260–phenylalanine 295.

Belongs to the dUTPase family. Requires Mg(2+) as cofactor.

It carries out the reaction dUTP + H2O = dUMP + diphosphate + H(+). Its function is as follows. Involved in nucleotide metabolism: produces dUMP, the immediate precursor of thymidine nucleotides and decreases the intracellular concentration of dUTP to avoid uracil incorporation into viral DNA. The chain is Deoxyuridine 5'-triphosphate nucleotidohydrolase from Human herpesvirus 8 type P (isolate GK18) (HHV-8).